A 160-amino-acid chain; its full sequence is MSDIKSLDDLKSVVGEAPVAEVAIAREPVRDSLGRSYATGKRKDAVARVWIKPGSGKVTVNGKPMDEYFARPVLQMILRQPFKVANVEGQFDVMATVAGGGLSGQAGAVKHGISKALQLYEPALRAALKAAGFLTRDSRVVERKKYGKAKARRSFQFSKR.

This sequence belongs to the universal ribosomal protein uS9 family.

The protein is Small ribosomal subunit protein uS9 of Cereibacter sphaeroides (strain ATCC 17029 / ATH 2.4.9) (Rhodobacter sphaeroides).